A 537-amino-acid chain; its full sequence is Probable protein kinase UbiB (537 aa).

Residues 24-44 (LLFEQPLLPWWLASLRLLMPW) traverse the membrane as a helical segment. The 369-residue stretch at 126 to 494 (RFDVEPLASA…RRRQGDNWAL (369 aa)) folds into the Protein kinase domain. Residues 132-140 (LASASVAQV) and Lys-154 contribute to the ATP site. Asp-289 acts as the Proton acceptor in catalysis. Transmembrane regions (helical) follow at residues 493-513 (ALRLLGAGLLGGGATLAAGAV) and 515-535 (LSAPAAWPAWLMLAAGLYLIV).

Belongs to the ABC1 family. UbiB subfamily.

It is found in the cell inner membrane. Its pathway is cofactor biosynthesis; ubiquinone biosynthesis [regulation]. In terms of biological role, is probably a protein kinase regulator of UbiI activity which is involved in aerobic coenzyme Q (ubiquinone) biosynthesis. In Pseudomonas entomophila (strain L48), this protein is Probable protein kinase UbiB.